The following is a 139-amino-acid chain: Protein FAM216B (139 aa).

It belongs to the FAM216 family.

In Homo sapiens (Human), this protein is Protein FAM216B (FAM216B).